The sequence spans 314 residues: Serine/threonine-protein phosphatase CPPED1 (314 aa).

Residue Ser2 is modified to Phosphoserine. Residues 47–250 (KAWSTGDCDN…KVVFSGHYHR (204 aa)) form a catalytic region. Residues Asp53, Asp90, Asn127, and His247 each coordinate a divalent metal cation. Position 294 is a phosphoserine (Ser294).

It belongs to the metallophosphoesterase superfamily. CPPED1 family. The cofactor is a divalent metal cation.

The protein localises to the cytoplasm. It carries out the reaction O-phospho-L-seryl-[protein] + H2O = L-seryl-[protein] + phosphate. The enzyme catalyses O-phospho-L-threonyl-[protein] + H2O = L-threonyl-[protein] + phosphate. Protein phosphatase that dephosphorylates AKT family kinase specifically at 'Ser-473', blocking cell cycle progression and promoting cell apoptosis. May play an inhibitory role in glucose uptake by adipocytes. In Pongo abelii (Sumatran orangutan), this protein is Serine/threonine-protein phosphatase CPPED1 (CPPED1).